Consider the following 64-residue polypeptide: UPF0434 protein BOV_A0835 (64 aa).

It belongs to the UPF0434 family.

This is UPF0434 protein BOV_A0835 from Brucella ovis (strain ATCC 25840 / 63/290 / NCTC 10512).